The sequence spans 250 residues: Beta-crystallin B1 (250 aa).

Residues 1–13 (MSQAAKASATTAV) show a composition bias toward polar residues. Residues 1-49 (MSQAAKASATTAVNPGPDGKGKGAPSTGPAPAPGPTPVPASVPRPAAKV) form a disordered region. S2 is modified (N-acetylserine). Residues 2 to 56 (SQAAKASATTAVNPGPDGKGKGAPSTGPAPAPGPTPVPASVPRPAAKVGDLPPGS) are N-terminal arm. The segment covering 28–42 (GPAPAPGPTPVPASV) has biased composition (pro residues). Beta/gamma crystallin 'Greek key' domains are found at residues 57 to 96 (YRLI…IVVS) and 97 to 141 (GPWV…RPIR). The segment at 142–146 (MDSQE) is connecting peptide. 2 consecutive Beta/gamma crystallin 'Greek key' domains span residues 147–188 (HKIC…TVSG) and 189–231 (GTWV…RRLR). The interval 233–250 (RQWHQEGCFPVLTAEPPK) is C-terminal arm.

This sequence belongs to the beta/gamma-crystallin family. As to quaternary structure, homo/heterodimer, or complexes of higher-order. The structure of beta-crystallin oligomers seems to be stabilized through interactions between the N-terminal arms. Specific cleavages in the N-terminal arm occur during lens maturation and give rise to truncated forms, leading to impaired oligomerization and protein insolubilization. The protease responsible for this partial degradation could be calpain II.

Its function is as follows. Crystallins are the dominant structural components of the vertebrate eye lens. The chain is Beta-crystallin B1 (Crybb1) from Mus musculus (Mouse).